The following is a 350-amino-acid chain: tRNA uridine(34) hydroxylase (350 aa).

The Rhodanese domain occupies 128–221 (EETDYVMIDT…YMKEYPNDQF (94 aa)). The active-site Cysteine persulfide intermediate is Cys-181.

The protein belongs to the TrhO family.

It catalyses the reaction uridine(34) in tRNA + AH2 + O2 = 5-hydroxyuridine(34) in tRNA + A + H2O. In terms of biological role, catalyzes oxygen-dependent 5-hydroxyuridine (ho5U) modification at position 34 in tRNAs. This is tRNA uridine(34) hydroxylase from Bdellovibrio bacteriovorus (strain ATCC 15356 / DSM 50701 / NCIMB 9529 / HD100).